The chain runs to 379 residues: MAPNIRKSHPLLKIINNSLIDLPSPSNISAWWNFGSLLGICLITQILTGLLLAMHYTADTTLAFSSVAHTCRNVQYGWFIRNLHANGASFFFICIYLHIGRGLYYGSYLYKETWNTGVILLLTLMATAFVGYVLPWGQMSFWGATVITNLFSAIPYIGQTLVEWAWGGFSVDNPTLTRFFALHFLLPFVIAGITLVHLTFLHESGSNNPLGIISHCDKIPFHPYFSLKDILGFTLMFIPLLSLAFFSPNLLGDPENFTPANPLATPPHIKPEWYFLFAYAILRSIPNKLGGVLALAASVLILFLIPLLHKSKQRSMTFRPLSQLLFWFLVANLLILTWIGSQPVEHPFIIIGQVASFTYFLILLVLFPAIAALENKMIY.

4 consecutive transmembrane segments (helical) span residues 34–54, 78–99, 114–134, and 179–199; these read FGSL…LLAM, WFIR…YLHI, WNTG…GYVL, and FFAL…VHLT. Residues H84 and H98 each contribute to the heme b site. H183 and H197 together coordinate heme b. H202 is a binding site for a ubiquinone. Transmembrane regions (helical) follow at residues 227-247, 289-309, 321-341, and 348-368; these read LKDI…AFFS, LGGV…PLLH, LSQL…WIGS, and FIII…VLFP.

It belongs to the cytochrome b family. As to quaternary structure, the cytochrome bc1 complex contains 11 subunits: 3 respiratory subunits (MT-CYB, CYC1 and UQCRFS1), 2 core proteins (UQCRC1 and UQCRC2) and 6 low-molecular weight proteins (UQCRH/QCR6, UQCRB/QCR7, UQCRQ/QCR8, UQCR10/QCR9, UQCR11/QCR10 and a cleavage product of UQCRFS1). This cytochrome bc1 complex then forms a dimer. Heme b is required as a cofactor.

It is found in the mitochondrion inner membrane. Its function is as follows. Component of the ubiquinol-cytochrome c reductase complex (complex III or cytochrome b-c1 complex) that is part of the mitochondrial respiratory chain. The b-c1 complex mediates electron transfer from ubiquinol to cytochrome c. Contributes to the generation of a proton gradient across the mitochondrial membrane that is then used for ATP synthesis. This chain is Cytochrome b (MT-CYB), found in Struthio camelus (Common ostrich).